A 496-amino-acid chain; its full sequence is Amino-acid acetyltransferase, mitochondrial (496 aa).

The region spanning 333–493 (YHGTDCLTNG…LDVIDSIQPT (161 aa)) is the N-acetyltransferase domain.

Belongs to the acetyltransferase family.

It localises to the mitochondrion. It carries out the reaction L-glutamate + acetyl-CoA = N-acetyl-L-glutamate + CoA + H(+). Its pathway is amino-acid biosynthesis; L-arginine biosynthesis; N(2)-acetyl-L-ornithine from L-glutamate: step 1/4. In terms of biological role, N-acetylglutamate synthase involved in arginine biosynthesis. The protein is Amino-acid acetyltransferase, mitochondrial (arg2) of Schizosaccharomyces japonicus (strain yFS275 / FY16936) (Fission yeast).